The chain runs to 196 residues: Pyridoxal 5'-phosphate synthase subunit PdxT (196 aa).

47-49 (GES) contacts L-glutamine. C79 (nucleophile) is an active-site residue. L-glutamine-binding positions include R106 and 134–135 (IR). Active-site charge relay system residues include H170 and E172.

It belongs to the glutaminase PdxT/SNO family. In the presence of PdxS, forms a dodecamer of heterodimers. Only shows activity in the heterodimer.

The catalysed reaction is aldehydo-D-ribose 5-phosphate + D-glyceraldehyde 3-phosphate + L-glutamine = pyridoxal 5'-phosphate + L-glutamate + phosphate + 3 H2O + H(+). It carries out the reaction L-glutamine + H2O = L-glutamate + NH4(+). It participates in cofactor biosynthesis; pyridoxal 5'-phosphate biosynthesis. In terms of biological role, catalyzes the hydrolysis of glutamine to glutamate and ammonia as part of the biosynthesis of pyridoxal 5'-phosphate. The resulting ammonia molecule is channeled to the active site of PdxS. The chain is Pyridoxal 5'-phosphate synthase subunit PdxT from Bacillus mycoides (strain KBAB4) (Bacillus weihenstephanensis).